We begin with the raw amino-acid sequence, 195 residues long: MITIGILNLQGAVSEHYDITKKAIENMGIEAEAISVRYADEVANCDGVIISGGESTVIGKIIKERGIDKVIKDNRIPVFGTCAGMVLLGKKTDFDQPLLGIMDISVKRNAFGRQVDSFESPISILGEDYLGVFIRAPSLDDYDKTKEDIKVLSKLDDEIIAIQQGHNIAIAFHPELTDDTRIHEYFIEEVLNCVE.

53 to 55 (GES) is an L-glutamine binding site. The active-site Nucleophile is C82. L-glutamine contacts are provided by residues R108 and 134–135 (IR). Active-site charge relay system residues include H173 and E175.

This sequence belongs to the glutaminase PdxT/SNO family. In the presence of PdxS, forms a dodecamer of heterodimers. Only shows activity in the heterodimer.

The catalysed reaction is aldehydo-D-ribose 5-phosphate + D-glyceraldehyde 3-phosphate + L-glutamine = pyridoxal 5'-phosphate + L-glutamate + phosphate + 3 H2O + H(+). It catalyses the reaction L-glutamine + H2O = L-glutamate + NH4(+). It participates in cofactor biosynthesis; pyridoxal 5'-phosphate biosynthesis. Functionally, catalyzes the hydrolysis of glutamine to glutamate and ammonia as part of the biosynthesis of pyridoxal 5'-phosphate. The resulting ammonia molecule is channeled to the active site of PdxS. The protein is Pyridoxal 5'-phosphate synthase subunit PdxT of Methanobrevibacter smithii (strain ATCC 35061 / DSM 861 / OCM 144 / PS).